We begin with the raw amino-acid sequence, 293 residues long: 4-hydroxy-tetrahydrodipicolinate synthase (293 aa).

Position 45 (threonine 45) interacts with pyruvate. The active-site Proton donor/acceptor is tyrosine 133. The active-site Schiff-base intermediate with substrate is the lysine 162. Isoleucine 204 contacts pyruvate.

The protein belongs to the DapA family. As to quaternary structure, homotetramer; dimer of dimers.

The protein localises to the cytoplasm. It carries out the reaction L-aspartate 4-semialdehyde + pyruvate = (2S,4S)-4-hydroxy-2,3,4,5-tetrahydrodipicolinate + H2O + H(+). It participates in amino-acid biosynthesis; L-lysine biosynthesis via DAP pathway; (S)-tetrahydrodipicolinate from L-aspartate: step 3/4. In terms of biological role, catalyzes the condensation of (S)-aspartate-beta-semialdehyde [(S)-ASA] and pyruvate to 4-hydroxy-tetrahydrodipicolinate (HTPA). This is 4-hydroxy-tetrahydrodipicolinate synthase from Mesorhizobium japonicum (strain LMG 29417 / CECT 9101 / MAFF 303099) (Mesorhizobium loti (strain MAFF 303099)).